A 100-amino-acid polypeptide reads, in one-letter code: Large ribosomal subunit protein uL23 (100 aa).

Belongs to the universal ribosomal protein uL23 family. In terms of assembly, part of the 50S ribosomal subunit. Contacts protein L29, and trigger factor when it is bound to the ribosome.

Functionally, one of the early assembly proteins it binds 23S rRNA. One of the proteins that surrounds the polypeptide exit tunnel on the outside of the ribosome. Forms the main docking site for trigger factor binding to the ribosome. This Shigella dysenteriae serotype 1 (strain Sd197) protein is Large ribosomal subunit protein uL23.